An 87-amino-acid chain; its full sequence is Small ribosomal subunit protein bS18 (87 aa).

Belongs to the bacterial ribosomal protein bS18 family. Part of the 30S ribosomal subunit. Forms a tight heterodimer with protein bS6.

Functionally, binds as a heterodimer with protein bS6 to the central domain of the 16S rRNA, where it helps stabilize the platform of the 30S subunit. The chain is Small ribosomal subunit protein bS18 from Nitratidesulfovibrio vulgaris (strain ATCC 29579 / DSM 644 / CCUG 34227 / NCIMB 8303 / VKM B-1760 / Hildenborough) (Desulfovibrio vulgaris).